The primary structure comprises 464 residues: PH domain-containing rcdII (464 aa).

The stretch at 8–210 forms a coiled coil; the sequence is KSSKEIIEDL…NTKLMSNLEI (203 aa). Disordered stretches follow at residues 215–290 and 317–347; these read NFNN…NSSG and CNNN…SNSN. Low complexity-rich tracts occupy residues 234 to 288, 317 to 328, and 338 to 347; these read STTT…SSNS, CNNNNNNNNGNS, and RSRSSSSNSN. The PH domain maps to 353-461; that stretch reads KIVKEGWLKR…WKDTISSLMP (109 aa).

This Dictyostelium discoideum (Social amoeba) protein is PH domain-containing rcdII (rcdII).